The chain runs to 206 residues: Imidazoleglycerol-phosphate dehydratase (206 aa).

Positions 1-21 (MTTPSTAPTPAPRKAEVSRNT) are disordered.

It belongs to the imidazoleglycerol-phosphate dehydratase family.

Its subcellular location is the cytoplasm. It carries out the reaction D-erythro-1-(imidazol-4-yl)glycerol 3-phosphate = 3-(imidazol-4-yl)-2-oxopropyl phosphate + H2O. It participates in amino-acid biosynthesis; L-histidine biosynthesis; L-histidine from 5-phospho-alpha-D-ribose 1-diphosphate: step 6/9. The chain is Imidazoleglycerol-phosphate dehydratase from Polaromonas sp. (strain JS666 / ATCC BAA-500).